The primary structure comprises 324 residues: Porphobilinogen deaminase (324 aa).

The residue at position 246 (Cys-246) is an S-(dipyrrolylmethanemethyl)cysteine. Residues 261–279 form an insert region; that stretch reads GQAPEEGGRAAASQAPAAL.

The protein belongs to the HMBS family. In terms of assembly, monomer. Dipyrromethane is required as a cofactor.

The catalysed reaction is 4 porphobilinogen + H2O = hydroxymethylbilane + 4 NH4(+). The protein operates within porphyrin-containing compound metabolism; protoporphyrin-IX biosynthesis; coproporphyrinogen-III from 5-aminolevulinate: step 2/4. Tetrapolymerization of the monopyrrole PBG into the hydroxymethylbilane pre-uroporphyrinogen in several discrete steps. The polypeptide is Porphobilinogen deaminase (hemC) (Paenibacillus macerans (Bacillus macerans)).